The chain runs to 1141 residues: DNA-directed RNA polymerase subunit beta (1141 aa).

Composition is skewed to acidic residues over residues 1063–1074 (EIEIKEDDDDVS) and 1096–1141 (GGNE…GDEE). Residues 1063–1141 (EIEIKEDDDD…VPDEAYGDEE (79 aa)) are disordered.

The protein belongs to the RNA polymerase beta chain family. In terms of assembly, the RNAP catalytic core consists of 2 alpha, 1 beta, 1 beta' and 1 omega subunit. When a sigma factor is associated with the core the holoenzyme is formed, which can initiate transcription.

It carries out the reaction RNA(n) + a ribonucleoside 5'-triphosphate = RNA(n+1) + diphosphate. Its function is as follows. DNA-dependent RNA polymerase catalyzes the transcription of DNA into RNA using the four ribonucleoside triphosphates as substrates. The sequence is that of DNA-directed RNA polymerase subunit beta from Moorella thermoacetica (strain ATCC 39073 / JCM 9320).